Here is a 289-residue protein sequence, read N- to C-terminus: Methionyl-tRNA formyltransferase (289 aa).

106-109 (SLLP) lines the (6S)-5,6,7,8-tetrahydrofolate pocket.

Belongs to the Fmt family.

It catalyses the reaction L-methionyl-tRNA(fMet) + (6R)-10-formyltetrahydrofolate = N-formyl-L-methionyl-tRNA(fMet) + (6S)-5,6,7,8-tetrahydrofolate + H(+). Functionally, attaches a formyl group to the free amino group of methionyl-tRNA(fMet). The formyl group appears to play a dual role in the initiator identity of N-formylmethionyl-tRNA by promoting its recognition by IF2 and preventing the misappropriation of this tRNA by the elongation apparatus. This Mycoplasmopsis pulmonis (strain UAB CTIP) (Mycoplasma pulmonis) protein is Methionyl-tRNA formyltransferase.